Here is a 656-residue protein sequence, read N- to C-terminus: NADH-ubiquinone oxidoreductase chain 5 (656 aa).

17 consecutive transmembrane segments (helical) span residues 4–21, 28–50, 81–103, 112–129, 133–155, 176–198, 208–230, 243–262, 272–294, 301–319, 329–351, 364–386, 409–431, 452–471, 514–536, 603–625, and 629–651; these read TLII…FFGR, AHLI…FFEV, LTVS…SISY, RFFS…ILVT, YLIM…NFWF, TLLT…STVF, IITI…VGLH, VSAL…LLMR, TVLV…IGLF, VIAY…AVGL, LVNH…HAVA, EFLP…VPFM, IVYF…VLYL, LFMT…FGYL, FVFT…KLLI, SLGN…GLIF, and LLYF…FALL.

This sequence belongs to the complex I subunit 5 family.

The protein localises to the mitochondrion inner membrane. It catalyses the reaction a ubiquinone + NADH + 5 H(+)(in) = a ubiquinol + NAD(+) + 4 H(+)(out). In terms of biological role, core subunit of the mitochondrial membrane respiratory chain NADH dehydrogenase (Complex I) that is believed to belong to the minimal assembly required for catalysis. Complex I functions in the transfer of electrons from NADH to the respiratory chain. The immediate electron acceptor for the enzyme is believed to be ubiquinone. The protein is NADH-ubiquinone oxidoreductase chain 5 (nad5) of Aspergillus niger.